We begin with the raw amino-acid sequence, 263 residues long: 3-methyl-2-oxobutanoate hydroxymethyltransferase (263 aa).

The Mg(2+) site is built by D45 and D84. 3-methyl-2-oxobutanoate-binding positions include 45–46 (DS), D84, and K112. Residue E114 participates in Mg(2+) binding. Catalysis depends on E180, which acts as the Proton acceptor.

Belongs to the PanB family. Homodecamer; pentamer of dimers. Mg(2+) serves as cofactor.

The protein resides in the cytoplasm. The catalysed reaction is 3-methyl-2-oxobutanoate + (6R)-5,10-methylene-5,6,7,8-tetrahydrofolate + H2O = 2-dehydropantoate + (6S)-5,6,7,8-tetrahydrofolate. Its pathway is cofactor biosynthesis; (R)-pantothenate biosynthesis; (R)-pantoate from 3-methyl-2-oxobutanoate: step 1/2. Functionally, catalyzes the reversible reaction in which hydroxymethyl group from 5,10-methylenetetrahydrofolate is transferred onto alpha-ketoisovalerate to form ketopantoate. The protein is 3-methyl-2-oxobutanoate hydroxymethyltransferase of Klebsiella pneumoniae subsp. pneumoniae (strain ATCC 700721 / MGH 78578).